We begin with the raw amino-acid sequence, 342 residues long: MKVDLFDFELPERLIAQVPLEQRDASRLMVLDKHTGELTDSSFKHIISFFNEGDCLVLNNTRVLPARLFGTKEDTGAKVELLLLKQETGDKWETLAKPAKRVKKGTVVTFGDGRLKAICTEELEHGGRKMEFQYDGIFYEVLESLGEMPLPPYIKEQLDDKERYQTVYSKEIGSAAAPTAGLHFTEEILQQLKDKGVQIEFITLHVGLGTFRPVSADEVEEHNMHAEFYQMSEETAAALNKVRENGGRIISVGTTSTRTLETIAGEHDGQFKASSGWTSIFIYPGYEFKAIDGMITNFHLPKSSLIMLVSALAGRENILRAYNHAVEEEYRFFSFGDAMLII.

This sequence belongs to the QueA family. Monomer.

Its subcellular location is the cytoplasm. It catalyses the reaction 7-aminomethyl-7-carbaguanosine(34) in tRNA + S-adenosyl-L-methionine = epoxyqueuosine(34) in tRNA + adenine + L-methionine + 2 H(+). Its pathway is tRNA modification; tRNA-queuosine biosynthesis. In terms of biological role, transfers and isomerizes the ribose moiety from AdoMet to the 7-aminomethyl group of 7-deazaguanine (preQ1-tRNA) to give epoxyqueuosine (oQ-tRNA). The sequence is that of S-adenosylmethionine:tRNA ribosyltransferase-isomerase from Bacillus subtilis (strain 168).